Here is a 118-residue protein sequence, read N- to C-terminus: Co-chaperonin GroES (118 aa).

This sequence belongs to the GroES chaperonin family. As to quaternary structure, heptamer of 7 subunits arranged in a ring. Interacts with the chaperonin GroEL.

Its subcellular location is the cytoplasm. Functionally, together with the chaperonin GroEL, plays an essential role in assisting protein folding. The GroEL-GroES system forms a nano-cage that allows encapsulation of the non-native substrate proteins and provides a physical environment optimized to promote and accelerate protein folding. GroES binds to the apical surface of the GroEL ring, thereby capping the opening of the GroEL channel. The sequence is that of Co-chaperonin GroES from Helicobacter pylori (strain P12).